The primary structure comprises 174 residues: Regenerating islet-derived protein 3-gamma (174 aa).

Residues 1–26 (MLPRVALTTMSWMLLSSLMLLSQVQG) form the signal peptide. Residues 27–37 (EDAKEDVPTSR) constitute a propeptide that is removed on maturation. Cystine bridges form between cysteine 40–cysteine 51, cysteine 68–cysteine 170, and cysteine 145–cysteine 162. Residues 47–171 (YGSYCYALFS…CISELPYVCK (125 aa)) form the C-type lectin domain. The tract at residues 103–118 (WIGLHDPTLGQEPNRG) is sufficient to activate EXTL3. Histidine 107 contacts Zn(2+). The short motif at 114–116 (EPN) is the EPN element. Residues glutamate 121 and histidine 144 each coordinate Zn(2+).

As to quaternary structure, forms a hexameric membrane-permeabilizing oligomeric pore on membrane phospholipids. The hexamer is formed by three dimers related by helical symmetry. Forms filaments, filamentation traps pore complexes and limits damage to host cells. Interacts with EXTL3. Proteolytic processing by trypsin removes an inhibitory N-terminal propeptide and is essential for peptidoglycan binding and antibacterial activity. As to expression, expressed in injured skeletal muscles and sciatic nerve (at protein level). Expressed in the pancreas. Expression increases during the acute phase of pancreatitis.

The protein resides in the secreted. It localises to the cytoplasm. Its activity is regulated as follows. Lipopolysaccharide inhibits pore-forming activity, explaining why is bactericidal for Gram-positive but not Gram-negative bacteria. Its function is as follows. Bactericidal C-type lectin which acts exclusively against Gram-positive bacteria and mediates bacterial killing by binding to surface-exposed carbohydrate moieties of peptidoglycan. Restricts bacterial colonization of the intestinal epithelial surface and consequently limits activation of adaptive immune responses by the microbiota. Acts as a hormone in response to different stimuli like anti-inflammatory signals, such as IL17A, or gut microbiome. Is secreted by different cell types to activate its receptor EXTL3 and induce cell specific signaling pathways. Induced by IL17A in keratinocytes, regulates keratinocyte proliferation and differentiation after skin injury. In parallel, inhibits skin inflammation through the inhibition of inflammatory cytokines such as IL6 and TNF. Induced by IL22 in lung epithelial cells, inhibits cytokine production and regulates allergic airway inflammation. Induced in small intestine by inulin-enriched diet and Lactobacillus gasseri enriched microbiome, plays a role in the improvement of gut barrier function, the regulation of energy balance and glucose levels. Modulates microbiota composition in duodenal contents. Produced by nociceptor in response to endotoxins, prevents endotoxic death by targeting kynurenine pathway in microglia. Functionally, has bacteriostatic activity. In terms of biological role, has bactericidal activity against L.monocytogenes and methicillin-resistant S.aureus. This chain is Regenerating islet-derived protein 3-gamma, found in Rattus norvegicus (Rat).